The following is a 37-amino-acid chain: Large ribosomal subunit protein bL36 (37 aa).

Belongs to the bacterial ribosomal protein bL36 family.

This Persephonella marina (strain DSM 14350 / EX-H1) protein is Large ribosomal subunit protein bL36.